Reading from the N-terminus, the 238-residue chain is tRNA (guanine-N(7)-)-methyltransferase (238 aa).

A compositionally biased stretch (polar residues) spans 1-12 (MTDTAENQTPND). The interval 1–20 (MTDTAENQTPNDRQAGHPRS) is disordered. Positions 70, 95, 122, and 145 each coordinate S-adenosyl-L-methionine. Residue aspartate 145 is part of the active site. Residues lysine 149, aspartate 181, and 216–219 (TKFE) each bind substrate.

Belongs to the class I-like SAM-binding methyltransferase superfamily. TrmB family.

The catalysed reaction is guanosine(46) in tRNA + S-adenosyl-L-methionine = N(7)-methylguanosine(46) in tRNA + S-adenosyl-L-homocysteine. The protein operates within tRNA modification; N(7)-methylguanine-tRNA biosynthesis. In terms of biological role, catalyzes the formation of N(7)-methylguanine at position 46 (m7G46) in tRNA. This is tRNA (guanine-N(7)-)-methyltransferase from Neisseria meningitidis serogroup C (strain 053442).